The sequence spans 499 residues: Glycerol kinase (499 aa).

Threonine 13 is an ADP binding site. ATP is bound by residues threonine 13, threonine 14, and serine 15. Residue threonine 13 participates in sn-glycerol 3-phosphate binding. Arginine 17 serves as a coordination point for ADP. 4 residues coordinate sn-glycerol 3-phosphate: arginine 83, glutamate 84, tyrosine 135, and aspartate 245. Glycerol-binding residues include arginine 83, glutamate 84, tyrosine 135, aspartate 245, and glutamine 246. Threonine 267 and glycine 310 together coordinate ADP. ATP-binding residues include threonine 267, glycine 310, glutamine 314, and glycine 411. 2 residues coordinate ADP: glycine 411 and asparagine 415.

This sequence belongs to the FGGY kinase family.

The catalysed reaction is glycerol + ATP = sn-glycerol 3-phosphate + ADP + H(+). Its pathway is polyol metabolism; glycerol degradation via glycerol kinase pathway; sn-glycerol 3-phosphate from glycerol: step 1/1. Its activity is regulated as follows. Inhibited by fructose 1,6-bisphosphate (FBP). Key enzyme in the regulation of glycerol uptake and metabolism. Catalyzes the phosphorylation of glycerol to yield sn-glycerol 3-phosphate. The chain is Glycerol kinase from Stenotrophomonas maltophilia (strain K279a).